The following is a 58-amino-acid chain: Small ribosomal subunit protein bS21 (58 aa).

The interval 24 to 58 (TKAGTLQEARKREHYEKPSVKRKRKSEAARKRKKI) is disordered. Residues 31–42 (EARKREHYEKPS) are compositionally biased toward basic and acidic residues. Over residues 43–58 (VKRKRKSEAARKRKKI) the composition is skewed to basic residues.

The protein belongs to the bacterial ribosomal protein bS21 family.

The protein is Small ribosomal subunit protein bS21 of Streptococcus thermophilus (strain CNRZ 1066).